The primary structure comprises 349 residues: Protein FAM98C (349 aa).

The segment at 313 to 349 (PDRGGRPNELEPPMPTWRSRREDGGPQCWGRKKKKKK) is disordered.

The protein belongs to the FAM98 family.

This is Protein FAM98C (FAM98C) from Homo sapiens (Human).